Here is a 1351-residue protein sequence, read N- to C-terminus: MTSIEKLLVQGIRSFDPREASVIDFYSPLTLIVGQNGAGKTTIIECLKYTCTGEMPPNCSSGQAFIHDTKIAGESEVKAQIKLRFKNPIGKPIVASRSLSLIQKSNKKQEYKQIDASLQSYTSDGQKVSKSFRCSDMDKEIPDLMGVAKPILKHVIFCHQEDSNWPLSESAKLKLKFDEIFSAVKYTKALKSLKDKRKELTTLIKELKLRLETISANIEHCNRIRKELIKAEEIYSNGNKSLEDIKIAIIEKQKTLSTIKIAESKLQELKNEVTVLNARKLEMERVKNQLFNSLTEVYQNETDEELVFMQSEFNRECETMATAEKELLENSEVLLSQKEVINNLIKENSSQKGRLQSLISQQDSILSDRDKQMKELVTRYKMSDFIQIQLPYQKEIVIKFINEITQKFDTLTSGISNYSKTNKQKLNAIQMKINQKRVDSNQFTSSSNEKMSTITLNSKKIQSLDQEIQQHTNSIGEIDTLEKQIQFSQSELSILKSDANLQEIQQSLDNLTTEKLEIEKEIQSLQSSLKLLNLQASSRTRLNIKRKEIQQNQQNINSQLNSQIINSINLILPNEFNNDNNNDDDDDQFRFNIIQRIEPIVPLINKKRLIFTNQLNELKQQFQILQNKKNQIDAQLTSSIEPQLKKKQIELESYEKLINDSKLKQSNLFENVNSNNNNNNNNNNGITVLLFENKINEMKLSLEKLEKSFIVLESEDILYKEYIEKANQDKECSLCKNEMNGNELTSFVHTLETHCNDIPNQLKQLKIEISNSKIQLEKFNKLLPIIVKREELIEKSIPELKESQKNLLEQQLKSNEMVLEKQNQIESLESQSVLYQQVTLVFQYIDQTKQSIQSIESEIQKEEKEIMKQSSDLRTIEEVDKDLEIQQEQLKTIEKEISNFTNKQKNDQIGIFEKERQLISIKNQLTTIKSASGIIDHLRDTKKELQSNNQQLQLEIENLQQSIDQSNNDAKQLENEFQQLEIEFEKKIDAYSKEKNTFSVRLDSINSLQSKILDPSELCKQLNEIQEKNQELESNLSTLSQDYLIGQQHISTIQQNLSSKDITKRAISDNISFRQHKNNVEQIIRQISRKNELIKEMMQSQLEIDSNKLEQEINSLKSKFDQITGQTAVLQSQINSNRQELSKPTYKNIDDVNKDLLIKLQTTETVGKDLDKYYKALDKSLMKYHTLKMDEINRSIKEIWQTTYKGSDIDTIEIRSEESGTANKTINYRVVMIKGDVELDMRGRCSAGQKVLACLVIRLALAENFCSNCGILALDEPTSHLDRANIESFANSLLNIIESRKSQKGFQLIIITHDEEFVQYLSRGNYCDYYWRVTKNANQHSHLERKEIAEL.

ATP contacts are provided by Arg13, Asn36, Gly37, Gly39, Lys40, Thr41, Thr42, Ile66, Asp68, and Gln160. Position 41 (Thr41) interacts with Mg(2+). Gln160 is a Mg(2+) binding site. 5 coiled-coil regions span residues 182–224 (SAVK…CNRI), 250–290 (IEKQ…KNQL), 338–358 (KEVINNLIKENSSQKGRLQSL), 458–562 (SKKI…QLNS), and 606–715 (KKRL…LESE). Residues 688 to 784 (VLLFENKINE…QLEKFNKLLP (97 aa)) form the Zinc-hook domain. Residues Cys732 and Cys735 each coordinate Zn(2+). 2 coiled-coil regions span residues 760-1045 (NQLK…DYLI) and 1074-1128 (RQHK…GQTA).

This sequence belongs to the SMC family. RAD50 subfamily. In terms of assembly, component of the MRN complex composed of two heterodimers RAD50 and MRE11 associated with a single NBS1. It depends on Zn(2+) as a cofactor.

It localises to the nucleus. The protein resides in the chromosome. The catalysed reaction is ATP + H2O = ADP + phosphate + H(+). Component of the MRN complex, which plays a central role in double-strand break (DSB) repair, DNA recombination, maintenance of telomere integrity and meiosis. The MRN complex is involved in the repair of DNA double-strand breaks (DSBs) via homologous recombination (HR), an error-free mechanism which primarily occurs during S and G2 phases. The complex (1) mediates the end resection of damaged DNA, which generates proper single-stranded DNA, a key initial steps in HR, and is (2) required for the recruitment of other repair factors and efficient activation of ATM and ATR upon DNA damage. The MRN complex possesses single-strand endonuclease activity and double-strand-specific 3'-5' exonuclease activity, which are provided by MRE11, to initiate end resection, which is required for single-strand invasion and recombination. Within the complex, RAD50 is both required to bind DNA ends and hold them in close proximity and regulate the activity of MRE11. RAD50 provides an ATP-dependent control of MRE11 by positioning DNA ends into the MRE11 active site: ATP-binding induces a large structural change from an open form with accessible MRE11 nuclease sites into a closed form. This Dictyostelium discoideum (Social amoeba) protein is DNA repair protein RAD50 (rad50).